The chain runs to 235 residues: Orotidine 5'-phosphate decarboxylase (235 aa).

Substrate contacts are provided by residues aspartate 17, lysine 39, 66-75, threonine 121, arginine 182, glutamine 191, glycine 211, and arginine 212; that span reads DLKLHDIGNT. The active-site Proton donor is lysine 68.

Belongs to the OMP decarboxylase family. Type 1 subfamily. As to quaternary structure, homodimer.

The catalysed reaction is orotidine 5'-phosphate + H(+) = UMP + CO2. It participates in pyrimidine metabolism; UMP biosynthesis via de novo pathway; UMP from orotate: step 2/2. Its function is as follows. Catalyzes the decarboxylation of orotidine 5'-monophosphate (OMP) to uridine 5'-monophosphate (UMP). The sequence is that of Orotidine 5'-phosphate decarboxylase from Rhodopseudomonas palustris (strain HaA2).